The following is a 361-amino-acid chain: Protein SSUH2 homolog (361 aa).

The protein resides in the cytoplasm. Its subcellular location is the nucleus. Functionally, plays a role in odontogenesis. The sequence is that of Protein SSUH2 homolog from Danio rerio (Zebrafish).